We begin with the raw amino-acid sequence, 248 residues long: 2,3-bisphosphoglycerate-dependent phosphoglycerate mutase (248 aa).

Substrate-binding positions include 8 to 15 (RHGESTWN), 21 to 22 (TG), R60, 87 to 90 (ERHY), K98, and 114 to 115 (RR). Catalysis depends on H9, which acts as the Tele-phosphohistidine intermediate. The Proton donor/acceptor role is filled by E87. Residues 118 to 137 (DTPPPALEPTDPRASYDDPR) form a disordered region. The segment covering 127–137 (TDPRASYDDPR) has biased composition (basic and acidic residues). Residue 183–184 (GN) participates in substrate binding.

The protein belongs to the phosphoglycerate mutase family. BPG-dependent PGAM subfamily. Homodimer.

It catalyses the reaction (2R)-2-phosphoglycerate = (2R)-3-phosphoglycerate. It functions in the pathway carbohydrate degradation; glycolysis; pyruvate from D-glyceraldehyde 3-phosphate: step 3/5. Functionally, catalyzes the interconversion of 2-phosphoglycerate and 3-phosphoglycerate. In Cupriavidus necator (strain ATCC 17699 / DSM 428 / KCTC 22496 / NCIMB 10442 / H16 / Stanier 337) (Ralstonia eutropha), this protein is 2,3-bisphosphoglycerate-dependent phosphoglycerate mutase.